Consider the following 330-residue polypeptide: Stimulated by retinoic acid gene 8 protein homolog (330 aa).

Positions 50 to 55 (RVARRR) match the Nuclear localization signal (NLS) motif. The stretch at 88 to 112 (QVLNKAKSHIPELEQTLDNLLKLKA) forms a coiled coil.

As to quaternary structure, interacts with XPO1. Interacts with MEIOSIN. Phosphorylated. As to expression, expressed specifically in testis and fetal ovaries.

The protein localises to the cytoplasm. Its subcellular location is the nucleus. Its function is as follows. Meiosis-inducer required for the transition into meiosis for both female and male germ cells. In female germ cells, acts downstream of ZGLP1 as a key effector of the meiotic program: required for premeiotic DNA replication and subsequent events in meiotic prophase. During spermatogenesis, next to its role in meiotic initiation, promotes (but is not required for) spermatogonial differentiation. In complex with MEIOSIN, directly activates the transcription of a subset of critical meiotic genes playing a central role in cell-cycle switching from mitosis to meiosis. This Homo sapiens (Human) protein is Stimulated by retinoic acid gene 8 protein homolog.